The following is a 707-amino-acid chain: NADP(+)-dependent formate dehydrogenase subunit beta (707 aa).

In terms of assembly, heterotetramer composed of two alpha (FdhA) and two beta (FdhB) subunits.

It is found in the cytoplasm. The catalysed reaction is formate + NADP(+) = CO2 + NADPH. Activity is very sensitive to oxygen. The activity in growing cells is enhanced when selenite and molybdate are added together to the growth medium. Tungstate replaces and is better than molybdate. Selenite is incorporated into the enzyme. Requires a sulfhydryl compound for activity. Inhibited by cyanide, EDTA, hypophosphite and mercaptoethanol. Sulfite inhibits the activity with NADP but not with methyl viologen as electron acceptor. Functionally, component of a dehydrogenase that catalyzes the NADP-dependent reduction of CO(2) to formate, the first step in the synthesis of the methyl group of acetate during synthesis of acetate from CO(2). In vitro, can use methyl viologen and benzyl viologen in addition to its natural electron acceptor. The sequence is that of NADP(+)-dependent formate dehydrogenase subunit beta from Moorella thermoacetica (Clostridium thermoaceticum).